The sequence spans 432 residues: Anaerobic glycerol-3-phosphate dehydrogenase subunit B (432 aa).

Belongs to the anaerobic G-3-P dehydrogenase subunit B family. In terms of assembly, composed of a catalytic GlpA/B dimer and of membrane bound GlpC. FMN serves as cofactor.

The catalysed reaction is a quinone + sn-glycerol 3-phosphate = dihydroxyacetone phosphate + a quinol. The protein operates within polyol metabolism; glycerol degradation via glycerol kinase pathway; glycerone phosphate from sn-glycerol 3-phosphate (anaerobic route): step 1/1. Conversion of glycerol 3-phosphate to dihydroxyacetone. Uses fumarate or nitrate as electron acceptor. This Haemophilus influenzae (strain 86-028NP) protein is Anaerobic glycerol-3-phosphate dehydrogenase subunit B.